The following is a 408-amino-acid chain: GTPase Obg (408 aa).

The 159-residue stretch at 1–159 (MKFVDEVSIR…RDLKMEMKVL (159 aa)) folds into the Obg domain. The segment at 127 to 150 (NTRFKSSTNRAPRQTTPGKPGDQR) is disordered. A compositionally biased stretch (polar residues) spans 129–143 (RFKSSTNRAPRQTTP). Positions 160-333 (ADVGLLGLPN…LSHDLMRYLE (174 aa)) constitute an OBG-type G domain. Residues 166-173 (GLPNAGKS), 191-195 (FTTLV), 213-216 (DIPG), 283-286 (NKSD), and 314-316 (SAI) each bind GTP. The Mg(2+) site is built by serine 173 and threonine 193. Residues 382 to 408 (HDIGDDDGWDDDFEDDEDGPEIIYVRD) form a disordered region. Positions 385–401 (GDDDGWDDDFEDDEDGP) are enriched in acidic residues.

Belongs to the TRAFAC class OBG-HflX-like GTPase superfamily. OBG GTPase family. In terms of assembly, monomer. Requires Mg(2+) as cofactor.

The protein resides in the cytoplasm. Functionally, an essential GTPase which binds GTP, GDP and possibly (p)ppGpp with moderate affinity, with high nucleotide exchange rates and a fairly low GTP hydrolysis rate. Plays a role in control of the cell cycle, stress response, ribosome biogenesis and in those bacteria that undergo differentiation, in morphogenesis control. This Pseudomonas putida (strain GB-1) protein is GTPase Obg.